Reading from the N-terminus, the 203-residue chain is Small ribosomal subunit protein uS4 (203 aa).

The tract at residues 1 to 46 (MSKRQSAKYKLDRRMGENIWGRPKSPVNRREYGPGQHGQRRKGKMS) is disordered. The 64-residue stretch at 94-157 (RRLDAVVYRA…QEMALVAEAQ (64 aa)) folds into the S4 RNA-binding domain.

Belongs to the universal ribosomal protein uS4 family. In terms of assembly, part of the 30S ribosomal subunit. Contacts protein S5. The interaction surface between S4 and S5 is involved in control of translational fidelity.

Functionally, one of the primary rRNA binding proteins, it binds directly to 16S rRNA where it nucleates assembly of the body of the 30S subunit. With S5 and S12 plays an important role in translational accuracy. This chain is Small ribosomal subunit protein uS4, found in Sphingopyxis alaskensis (strain DSM 13593 / LMG 18877 / RB2256) (Sphingomonas alaskensis).